Reading from the N-terminus, the 232-residue chain is Fibrillarin-like rRNA/tRNA 2'-O-methyltransferase (232 aa).

Residues 89 to 90, 108 to 109, 133 to 134, and 153 to 156 each bind S-adenosyl-L-methionine; these read TT, EF, DA, and DIAQ.

The protein belongs to the methyltransferase superfamily. Fibrillarin family. As to quaternary structure, interacts with nop5. Component of box C/D small ribonucleoprotein (sRNP) particles that contain rpl7ae, FlpA and nop5, plus a guide RNA.

In terms of biological role, involved in pre-rRNA and tRNA processing. Utilizes the methyl donor S-adenosyl-L-methionine to catalyze the site-specific 2'-hydroxyl methylation of ribose moieties in rRNA and tRNA. Site specificity is provided by a guide RNA that base pairs with the substrate. Methylation occurs at a characteristic distance from the sequence involved in base pairing with the guide RNA. This chain is Fibrillarin-like rRNA/tRNA 2'-O-methyltransferase, found in Saccharolobus islandicus (strain M.16.27) (Sulfolobus islandicus).